The sequence spans 304 residues: Non-specific ribonucleoside hydrolase RihC (304 aa).

His-233 is a catalytic residue.

Belongs to the IUNH family. RihC subfamily.

Its function is as follows. Hydrolyzes both purine and pyrimidine ribonucleosides with a broad-substrate specificity. This Shigella sonnei (strain Ss046) protein is Non-specific ribonucleoside hydrolase RihC.